An 86-amino-acid polypeptide reads, in one-letter code: Large ribosomal subunit protein bL27 (86 aa).

Residues 1-26 form a disordered region; sequence MATKKAGGSSRNGRDSAGRRLGVKQS.

The protein belongs to the bacterial ribosomal protein bL27 family.

This is Large ribosomal subunit protein bL27 from Rickettsia canadensis (strain McKiel).